Consider the following 89-residue polypeptide: Small ribosomal subunit protein bS20 (89 aa).

The segment at methionine 1 to serine 26 is disordered.

The protein belongs to the bacterial ribosomal protein bS20 family.

Binds directly to 16S ribosomal RNA. The protein is Small ribosomal subunit protein bS20 of Dechloromonas aromatica (strain RCB).